An 838-amino-acid chain; its full sequence is V-type proton ATPase 116 kDa subunit a 1 (838 aa).

At 1 to 388 the chain is on the cytoplasmic side; the sequence is MGELFRSEEM…DAYGIGTYRE (388 aa). Phosphothreonine occurs at positions 250 and 360. Position 364 is a phosphotyrosine (tyrosine 364). Residues 389 to 407 form a helical membrane-spanning segment; the sequence is INPAPYTIITFPFLFAVMF. At 408-409 the chain is on the vacuolar side; it reads GD. A helical membrane pass occupies residues 410–426; the sequence is LGHGILMTLFAVWMVLK. Residues 427 to 441 are Cytoplasmic-facing; it reads ESRILSQKNENEMFS. A helical membrane pass occupies residues 442-471; it reads TIFSGRYIILLMGVFSIYTGLIYNDCFSKS. Residues 472-535 lie on the Vacuolar side of the membrane; the sequence is LNIFGSSWSV…ATNKLTFLNS (64 aa). Residues 536–555 traverse the membrane as a helical segment; sequence FKMKMSVILGIIHMLFGVSL. Over 556–573 the chain is Cytoplasmic; sequence SLFNHTYFKKPLNIYFGF. Residues 574-594 form a helical membrane-spanning segment; it reads IPEIIFMTSLFGYLVILIFYK. Topologically, residues 595-639 are vacuolar; that stretch reads WTAYNAKTSEKAPSLLIHFINMFLFSYGDSGNSMLYSGQKGIQCF. Residues 640–659 form a helical membrane-spanning segment; the sequence is LVVVALLCVPWMLLFKPLVL. The Cytoplasmic segment spans residues 660–725; the sequence is RRQYLRRKHL…DTMVHQAIHT (66 aa). Residues 726-750 traverse the membrane as a helical segment; sequence IEYCLGCISNTASYLRLWALSLAHA. The Vacuolar segment spans residues 751–771; that stretch reads QLSEVLWTMVIHIGLKVKSLA. Residues 772–810 form a helical membrane-spanning segment; sequence GGLALFFIFAAFATLTVAILLIMEGLSAFLHALRLHWVE. Residues 811 to 838 are Cytoplasmic-facing; the sequence is FQNKFYSGTGFKFLPFSFEHIREGKFDD.

The protein belongs to the V-ATPase 116 kDa subunit family. In terms of assembly, V-ATPase is a heteromultimeric enzyme made up of two complexes: the ATP-hydrolytic V1 complex and the proton translocation V0 complex. The V1 complex consists of three catalytic AB heterodimers that form a heterohexamer, three peripheral stalks each consisting of EG heterodimers, one central rotor including subunits D and F, and the regulatory subunits C and H. The proton translocation complex V0 consists of the proton transport subunit a, a ring of proteolipid subunits c9c'', rotary subunit d, subunits e and f, and the accessory subunits ATP6AP1/Ac45 and ATP6AP2/PRR. Interacts with SPAAR. In terms of tissue distribution, expressed in brain (at protein level). As to expression, expressed heart, kidney, liver, spleen, and to a lesser extent in brain.

The protein localises to the cytoplasmic vesicle. The protein resides in the clathrin-coated vesicle membrane. Its subcellular location is the secretory vesicle. It is found in the synaptic vesicle membrane. It localises to the melanosome. Its function is as follows. Subunit of the V0 complex of vacuolar(H+)-ATPase (V-ATPase), a multisubunit enzyme composed of a peripheral complex (V1) that hydrolyzes ATP and a membrane integral complex (V0) that translocates protons. V-ATPase is responsible for the acidification of various organelles, such as lysosomes, endosomes, the trans-Golgi network, and secretory granules, including synaptic vesicles. In certain cell types, can be exported to the plasma membrane, where it is involved in the acidification of the extracellular environment. Required for assembly and activity of the vacuolar ATPase. Through its action on compartment acidification, plays an essential role in neuronal development in terms of integrity and connectivity of neurons. This chain is V-type proton ATPase 116 kDa subunit a 1 (ATP6V0A1), found in Bos taurus (Bovine).